The primary structure comprises 247 residues: ATP synthase subunit a, chloroplastic (247 aa).

A run of 5 helical transmembrane segments spans residues 38 to 58, 95 to 115, 134 to 154, 199 to 219, and 220 to 240; these read QVLI…AIAV, VPFI…GALL, INTT…AGLT, LVVV…VMFL, and GLFT…AYIG.

It belongs to the ATPase A chain family. In terms of assembly, F-type ATPases have 2 components, CF(1) - the catalytic core - and CF(0) - the membrane proton channel. CF(1) has five subunits: alpha(3), beta(3), gamma(1), delta(1), epsilon(1). CF(0) has four main subunits: a, b, b' and c.

Its subcellular location is the plastid. It is found in the chloroplast thylakoid membrane. Key component of the proton channel; it plays a direct role in the translocation of protons across the membrane. This Illicium oligandrum (Star anise) protein is ATP synthase subunit a, chloroplastic.